A 434-amino-acid polypeptide reads, in one-letter code: MTTQVVNVIGAGLAGSEAAYQIAKRGVQVRLYEMRPVRQTPAHHTDKFAELVCSNSLRANTLTNAVGVIKEEMRLMDSVIIRAADECSVPAGGALAVDRHEFAAKVTEYVKNHPNVTVVNEEITEIPEGPTVIATGPLTSPDLSAQLKELTGEDYFYFYDAAAPIVEKDSIDMNKVYLKSRYDKGEAAYLNCPMTEEEFDRFYEALIAAETVPLKEFEKEIFFEGCMPVEVMASRGRQTLVFGPMKPVGLEDPKTGKTPYAVVQLRQDDAAGTLYNIVGFQTHLKWGPQKEVLQLIPGLENAEIVRYGVMHRNTFINSPNLLRPTYQYKQRDDLFFAGQMTGVEGYVESAASGLLAGINAARLVKGEEPVVLPPVTAMGSMANYITATNAKNFQPMNANFGLFAPLEKKIKKKAERNEAYATRALETIRNFVNI.

10 to 15 is an FAD binding site; that stretch reads GAGLAG.

The protein belongs to the MnmG family. TrmFO subfamily. The cofactor is FAD.

It is found in the cytoplasm. The catalysed reaction is uridine(54) in tRNA + (6R)-5,10-methylene-5,6,7,8-tetrahydrofolate + NADH + H(+) = 5-methyluridine(54) in tRNA + (6S)-5,6,7,8-tetrahydrofolate + NAD(+). It catalyses the reaction uridine(54) in tRNA + (6R)-5,10-methylene-5,6,7,8-tetrahydrofolate + NADPH + H(+) = 5-methyluridine(54) in tRNA + (6S)-5,6,7,8-tetrahydrofolate + NADP(+). Its function is as follows. Catalyzes the folate-dependent formation of 5-methyl-uridine at position 54 (M-5-U54) in all tRNAs. This chain is Methylenetetrahydrofolate--tRNA-(uracil-5-)-methyltransferase TrmFO, found in Bacillus cereus (strain ATCC 10987 / NRS 248).